We begin with the raw amino-acid sequence, 933 residues long: uncharacterized protein (933 aa).

Residues 1–28 show a composition bias toward polar residues; sequence MNGNLPHIQIQSPKNSLDHLNNGRQATH. 3 disordered regions span residues 1 to 135, 173 to 194, and 252 to 275; these read MNGN…GESD, MDNE…NAAD, and ATDF…ADAQ. Residues 29 to 47 are compositionally biased toward basic and acidic residues; sequence NFEHGKPGDREEANGHADA. Positions 49–59 are enriched in low complexity; sequence SSSGRSRYLSS. Polar residues-rich tracts occupy residues 87–101 and 108–135; these read TLSF…SNTH and NRSS…GESD. Over residues 173–182 the composition is skewed to acidic residues; that stretch reads MDNESSEEER. The span at 264 to 275 shows a compositional bias: polar residues; sequence EPSSSRHTADAQ. 8 WD repeats span residues 314–353, 385–423, 425–465, 467–506, 517–563, 568–607, 617–657, and 665–710; these read SSNN…HARS, GHTA…CLCC, EHSD…VSFW, ELPE…FRTQ, AKGS…LELK, ANAQ…MHKT, ASVR…SVIS, and PSLR…AARK. Phosphoserine is present on Ser722. Positions 756 to 796 are disordered; that stretch reads NASQITNNENNGNDDIKKGDEPEEEHVGLRKNSTQEKNANL. The segment covering 757–768 has biased composition (polar residues); sequence ASQITNNENNGN. The segment covering 769–783 has biased composition (basic and acidic residues); that stretch reads DDIKKGDEPEEEHVG.

The protein localises to the endoplasmic reticulum. Its subcellular location is the nucleus. This is an uncharacterized protein from Schizosaccharomyces pombe (strain 972 / ATCC 24843) (Fission yeast).